The chain runs to 215 residues: BAG family molecular chaperone regulator 5, mitochondrial (215 aa).

The N-terminal 14 residues, 1 to 14, are a transit peptide targeting the mitochondrion; the sequence is MKRSRKFSSSTTTT. One can recognise an IQ domain in the interval 50–79; it reads ATAAAARIQSGYRSYRIRNLYKKISSINRE. The BAG domain maps to 72 to 149; the sequence is KISSINREAN…GMQEILDSIS (78 aa).

As to quaternary structure, binds to the ATPase domain of HSP70/HSC70 chaperones. Interacts with HSP70-1.

The protein localises to the mitochondrion. Its function is as follows. Co-chaperone that regulates diverse cellular pathways, such as programmed cell death and stress responses. In Arabidopsis thaliana (Mouse-ear cress), this protein is BAG family molecular chaperone regulator 5, mitochondrial (BAG5).